We begin with the raw amino-acid sequence, 408 residues long: Succinylornithine transaminase (408 aa).

K252 carries the N6-(pyridoxal phosphate)lysine modification.

It belongs to the class-III pyridoxal-phosphate-dependent aminotransferase family. AstC subfamily. The cofactor is pyridoxal 5'-phosphate.

It carries out the reaction N(2)-succinyl-L-ornithine + 2-oxoglutarate = N-succinyl-L-glutamate 5-semialdehyde + L-glutamate. It functions in the pathway amino-acid degradation; L-arginine degradation via AST pathway; L-glutamate and succinate from L-arginine: step 3/5. Catalyzes the transamination of N(2)-succinylornithine and alpha-ketoglutarate into N(2)-succinylglutamate semialdehyde and glutamate. Can also act as an acetylornithine aminotransferase. The sequence is that of Succinylornithine transaminase from Salmonella dublin (strain CT_02021853).